The following is a 645-amino-acid chain: 1,4-alpha-glucan branching enzyme GlgB (645 aa).

D309 (nucleophile) is an active-site residue. E352 functions as the Proton donor in the catalytic mechanism. A disordered region spans residues 619 to 645; the sequence is VKTRKGSKKQDGSKTKVRSNVTSRGKR. The segment covering 636-645 has biased composition (polar residues); the sequence is RSNVTSRGKR.

It belongs to the glycosyl hydrolase 13 family. GlgB subfamily. In terms of assembly, monomer.

The catalysed reaction is Transfers a segment of a (1-&gt;4)-alpha-D-glucan chain to a primary hydroxy group in a similar glucan chain.. It functions in the pathway glycan biosynthesis; glycogen biosynthesis. Its function is as follows. Catalyzes the formation of the alpha-1,6-glucosidic linkages in glycogen by scission of a 1,4-alpha-linked oligosaccharide from growing alpha-1,4-glucan chains and the subsequent attachment of the oligosaccharide to the alpha-1,6 position. This Bacillus cereus (strain B4264) protein is 1,4-alpha-glucan branching enzyme GlgB.